Consider the following 56-residue polypeptide: Large ribosomal subunit protein bL32 (56 aa).

Belongs to the bacterial ribosomal protein bL32 family.

This is Large ribosomal subunit protein bL32 from Synechococcus sp. (strain CC9311).